A 571-amino-acid chain; its full sequence is MSGTSWLQFAALIAVLLLTAPALGGYLAKIYGDEAKKPGDRVFGPIERVIYQVCRVDPGSEQRWSTYALSVLAFSVMSFLLLYGIARFQGVLPFNPTDKPAVTDHVAFNAAVSFMTNTNWQSYSGEATMSHFTQMTGLAVQNFVSASAGMCVLAALIRGLARKRASTLGNFWVDLARTVLRIMFPLSFVVAILLVSQGVIQNLHGFIVANTLEGAPQLIPGGPVASQVAIKQLGTNGGGFFNVNSAHPFENYTPIGNFVENWAILIIPFALCFAFGKMVHDRRQGWAVLAIMGIIWIGMSVAAMSFEAKGNPRLDALGVTQQTTVDQSGGNLEGKEVRFGVGASGLWAASTTGTSNGSVNSMHDSYTPLGGMVPLAHMMLGEVSPGGTGVGLNGLLVMAILAVFIAGLMVGRTPEYLGKKIQATEMKLVTLYILAMPIALLSFAAASVLISSALASRNNPGPHGLSEILYAYTSGANNNGSAFAGLTASTWSYDTTIGVAMLIGRFFLIIPVLAIAGSLARKGTTPVTAATFPTHKPLFVGLVIGVVLIVGGLTFFPALALGPIVEQLSTQ.

10 helical membrane-spanning segments follow: residues 7–27, 66–86, 137–157, 188–208, 255–275, 286–306, 390–410, 430–450, 497–517, and 538–558; these read LQFA…GGYL, TYAL…YGIA, GLAV…AALI, FVVA…GFIV, IGNF…CFAF, WAVL…AMSF, VGLN…GLMV, TLYI…SVLI, IGVA…AIAG, and LFVG…FFPA.

Belongs to the KdpA family. The system is composed of three essential subunits: KdpA, KdpB and KdpC.

It is found in the cell membrane. In terms of biological role, part of the high-affinity ATP-driven potassium transport (or Kdp) system, which catalyzes the hydrolysis of ATP coupled with the electrogenic transport of potassium into the cytoplasm. This subunit binds the extracellular potassium ions and delivers the ions to the membrane domain of KdpB through an intramembrane tunnel. The polypeptide is Potassium-transporting ATPase potassium-binding subunit (Mycobacterium bovis (strain ATCC BAA-935 / AF2122/97)).